The primary structure comprises 733 residues: Polyribonucleotide nucleotidyltransferase (733 aa).

2 residues coordinate Mg(2+): Asp-488 and Asp-494. Residues 555–614 (PRIEMMTIPVEKIREVIGSGGKVIREIVEQTGAKINIEDDGTIKIASPDTKSIETAKSWI) enclose the KH domain. One can recognise an S1 motif domain in the interval 624–692 (GTIYQGTVVK…ERGKIRLSMK (69 aa)). The tract at residues 698–733 (TGKEIPQDDLIKTEKEQNPDEKNKSEKKRHNRKKED) is disordered. Positions 702-721 (IPQDDLIKTEKEQNPDEKNK) are enriched in basic and acidic residues. Basic residues predominate over residues 722–733 (SEKKRHNRKKED).

It belongs to the polyribonucleotide nucleotidyltransferase family. It depends on Mg(2+) as a cofactor.

It localises to the cytoplasm. The catalysed reaction is RNA(n+1) + phosphate = RNA(n) + a ribonucleoside 5'-diphosphate. Its function is as follows. Involved in mRNA degradation. Catalyzes the phosphorolysis of single-stranded polyribonucleotides processively in the 3'- to 5'-direction. This is Polyribonucleotide nucleotidyltransferase from Bartonella bacilliformis (strain ATCC 35685 / KC583 / Herrer 020/F12,63).